We begin with the raw amino-acid sequence, 324 residues long: Olfactory receptor 1L3 (324 aa).

Residues 1-25 (MGMSNLTRLSEFILLGLSSRSEDQR) are Extracellular-facing. An N-linked (GlcNAc...) asparagine glycan is attached at Asn-5. Residues 26–49 (PLFALFLIIYLVTLMGNLLIILAI) traverse the membrane as a helical segment. Over 50–57 (HSDPRLQN) the chain is Cytoplasmic. A helical transmembrane segment spans residues 58 to 79 (PMYFFLSILSFADICYTTVIVP). At 80–100 (KMLVNFLSEKKTISYAECLAQ) the chain is on the extracellular side. Cys-97 and Cys-189 are joined by a disulfide. Residues 101–120 (MYFFLVFGNIDSYLLAAMAI) traverse the membrane as a helical segment. The Cytoplasmic segment spans residues 121-139 (NRCVAICNPFHYVTVMNRR). The helical transmembrane segment at 140–158 (CCVLLLAFPITFSYFHSLL) threads the bilayer. Topologically, residues 159 to 196 (HVLLVNRLTFCTSNVIHHFFCDVNPVLKLSCSSTFVNE) are extracellular. A helical transmembrane segment spans residues 197 to 219 (IVAMTEGLASVMAPFVCIIISYL). At 220-236 (RILIAVLKIPSAAGKHK) the chain is on the cytoplasmic side. Residues 237–259 (AFSTCSSHLTVVILFYGSISYVY) form a helical membrane-spanning segment. At 260 to 271 (LQPLSSYTVKDR) the chain is on the extracellular side. The helical transmembrane segment at 272 to 291 (IATINYTVLTSVLNPFIYSL) threads the bilayer. Residues 292–324 (RNKDMKRGLQKLINKIKSQMSRFSTKTNKICGP) are Cytoplasmic-facing.

This sequence belongs to the G-protein coupled receptor 1 family.

It is found in the cell membrane. In terms of biological role, odorant receptor. In Homo sapiens (Human), this protein is Olfactory receptor 1L3 (OR1L3).